The sequence spans 366 residues: DNA polymerase IV (366 aa).

The UmuC domain maps to 6–197 (IIHVDMDYFY…LKVSKLWGIG (192 aa)). Residues D10 and D114 each contribute to the Mg(2+) site. E115 is a catalytic residue.

The protein belongs to the DNA polymerase type-Y family. As to quaternary structure, monomer. Mg(2+) serves as cofactor.

It localises to the cytoplasm. It catalyses the reaction DNA(n) + a 2'-deoxyribonucleoside 5'-triphosphate = DNA(n+1) + diphosphate. Functionally, poorly processive, error-prone DNA polymerase involved in untargeted mutagenesis. Copies undamaged DNA at stalled replication forks, which arise in vivo from mismatched or misaligned primer ends. These misaligned primers can be extended by PolIV. Exhibits no 3'-5' exonuclease (proofreading) activity. May be involved in translesional synthesis. This chain is DNA polymerase IV, found in Methanosarcina acetivorans (strain ATCC 35395 / DSM 2834 / JCM 12185 / C2A).